We begin with the raw amino-acid sequence, 122 residues long: Large ribosomal subunit protein uL14 (122 aa).

This sequence belongs to the universal ribosomal protein uL14 family. Part of the 50S ribosomal subunit. Forms a cluster with proteins L3 and L19. In the 70S ribosome, L14 and L19 interact and together make contacts with the 16S rRNA in bridges B5 and B8.

In terms of biological role, binds to 23S rRNA. Forms part of two intersubunit bridges in the 70S ribosome. The chain is Large ribosomal subunit protein uL14 from Shouchella clausii (strain KSM-K16) (Alkalihalobacillus clausii).